The sequence spans 106 residues: NADH-quinone oxidoreductase subunit K (106 aa).

A run of 3 helical transmembrane segments spans residues 10-30 (VTYILGLAGILFSIGVLGVLI), 34-54 (IVIIFMSVELILNSVNLVFVT), and 67-87 (IVFFVMAIAAAEAAVGLALVI).

It belongs to the complex I subunit 4L family. In terms of assembly, NDH-1 is composed of 14 different subunits. Subunits NuoA, H, J, K, L, M, N constitute the membrane sector of the complex.

It is found in the cell inner membrane. It carries out the reaction a quinone + NADH + 5 H(+)(in) = a quinol + NAD(+) + 4 H(+)(out). Functionally, NDH-1 shuttles electrons from NADH, via FMN and iron-sulfur (Fe-S) centers, to quinones in the respiratory chain. The immediate electron acceptor for the enzyme in this species is believed to be ubiquinone. Couples the redox reaction to proton translocation (for every two electrons transferred, four hydrogen ions are translocated across the cytoplasmic membrane), and thus conserves the redox energy in a proton gradient. The chain is NADH-quinone oxidoreductase subunit K from Leptospira biflexa serovar Patoc (strain Patoc 1 / Ames).